The chain runs to 217 residues: 3,4-dihydroxy-2-butanone 4-phosphate synthase (217 aa).

Residues 37 to 38, Asp-42, 150 to 154, and Glu-174 each bind D-ribulose 5-phosphate; these read RE and RGGHT. Position 38 (Glu-38) interacts with Mg(2+). His-153 contacts Mg(2+).

This sequence belongs to the DHBP synthase family. As to quaternary structure, homodimer. The cofactor is Mg(2+). Requires Mn(2+) as cofactor.

It catalyses the reaction D-ribulose 5-phosphate = (2S)-2-hydroxy-3-oxobutyl phosphate + formate + H(+). Its pathway is cofactor biosynthesis; riboflavin biosynthesis; 2-hydroxy-3-oxobutyl phosphate from D-ribulose 5-phosphate: step 1/1. Its function is as follows. Catalyzes the conversion of D-ribulose 5-phosphate to formate and 3,4-dihydroxy-2-butanone 4-phosphate. The sequence is that of 3,4-dihydroxy-2-butanone 4-phosphate synthase from Escherichia coli O127:H6 (strain E2348/69 / EPEC).